An 819-amino-acid polypeptide reads, in one-letter code: Leucine--tRNA ligase (819 aa).

Residues proline 40–histidine 51 carry the 'HIGH' region motif. The 'KMSKS' region signature appears at lysine 600 to serine 604. Position 603 (lysine 603) interacts with ATP.

This sequence belongs to the class-I aminoacyl-tRNA synthetase family.

It is found in the cytoplasm. It catalyses the reaction tRNA(Leu) + L-leucine + ATP = L-leucyl-tRNA(Leu) + AMP + diphosphate. The sequence is that of Leucine--tRNA ligase from Chlamydia trachomatis serovar A (strain ATCC VR-571B / DSM 19440 / HAR-13).